A 966-amino-acid polypeptide reads, in one-letter code: Regulator of telomere elongation helicase 1 homolog (966 aa).

Residues 7–284 (AGIPVHFPFE…QDMAGDEPKD (278 aa)) form the Helicase ATP-binding domain. 42–49 (SPTGTGKT) serves as a coordination point for ATP. Positions 146, 164, 173, and 209 each coordinate [4Fe-4S] cluster. Residues 233–236 (DEAH) carry the DEAH box motif. The interval 844 to 864 (VKIHKRERSSPTAPESTSQVS) is disordered. Residues 853 to 863 (SPTAPESTSQV) show a composition bias toward polar residues. Position 855 is a phosphothreonine (Thr-855).

It belongs to the helicase family. RAD3/XPD subfamily.

It is found in the nucleus. It catalyses the reaction ATP + H2O = ADP + phosphate + H(+). Functionally, a probable ATP-dependent DNA helicase implicated in DNA repair and the maintenance of genomic stability. Acts as an anti-recombinase to counteract toxic recombination and limit crossover during meiosis. Regulates meiotic recombination and crossover homeostasis by physically dissociating strand invasion events and thereby promotes noncrossover repair by meiotic synthesis dependent strand annealing (SDSA) as well as disassembly of D loop recombination intermediates. This is Regulator of telomere elongation helicase 1 homolog from Drosophila sechellia (Fruit fly).